Here is a 131-residue protein sequence, read N- to C-terminus: Guanyl-specific ribonuclease F1 (131 aa).

Residues 1–25 (MLFFKSIASLAALVSLAVASPIESR) form the signal peptide. A Pyrrolidone carboxylic acid modification is found at Gln-26. Disulfide bonds link Cys-31/Cys-127 and Cys-49/Cys-108. His-65 is an active-site residue. Glu-83 serves as the catalytic Proton acceptor. His-116 (proton donor) is an active-site residue.

Belongs to the ribonuclease N1/T1 family.

It catalyses the reaction [RNA] containing guanosine + H2O = an [RNA fragment]-3'-guanosine-3'-phosphate + a 5'-hydroxy-ribonucleotide-3'-[RNA fragment].. The chain is Guanyl-specific ribonuclease F1 from Fusarium fujikuroi (Bakanae and foot rot disease fungus).